The chain runs to 527 residues: Zinc finger protein 35 (527 aa).

The interval Met-9–Pro-221 is globular domain. Residues Pro-16–Val-38 form a disordered region. Residues Lys-20, Lys-21, Lys-99, Lys-117, Lys-125, Lys-144, Lys-158, Lys-189, and Lys-214 each participate in a glycyl lysine isopeptide (Lys-Gly) (interchain with G-Cter in SUMO2) cross-link. 2 C2H2-type zinc fingers span residues Phe-222–His-244 and Phe-250–His-272. Lys-276 participates in a covalent cross-link: Glycyl lysine isopeptide (Lys-Gly) (interchain with G-Cter in SUMO2). 9 consecutive C2H2-type zinc fingers follow at residues Tyr-278–His-300, Phe-306–His-328, Tyr-334–His-356, Phe-362–His-384, Tyr-390–His-412, Tyr-418–His-440, Tyr-446–His-468, Tyr-474–His-496, and Tyr-502–His-524.

Belongs to the krueppel C2H2-type zinc-finger protein family.

It localises to the nucleus. In terms of biological role, may be involved in transcriptional regulation. Involved in cell differentiation and/or proliferation. The polypeptide is Zinc finger protein 35 (ZNF35) (Homo sapiens (Human)).